The primary structure comprises 103 residues: Co-chaperonin GroES (103 aa).

It belongs to the GroES chaperonin family. Heptamer of 7 subunits arranged in a ring. Interacts with the chaperonin GroEL.

The protein localises to the cytoplasm. Its function is as follows. Together with the chaperonin GroEL, plays an essential role in assisting protein folding. The GroEL-GroES system forms a nano-cage that allows encapsulation of the non-native substrate proteins and provides a physical environment optimized to promote and accelerate protein folding. GroES binds to the apical surface of the GroEL ring, thereby capping the opening of the GroEL channel. In Prochlorococcus marinus (strain MIT 9312), this protein is Co-chaperonin GroES.